We begin with the raw amino-acid sequence, 266 residues long: Undecaprenyl-diphosphatase (266 aa).

8 consecutive transmembrane segments (helical) span residues 1 to 21 (MDTF…FLPI), 39 to 59 (QGLS…VIYF), 87 to 107 (WWII…KDFI), 111 to 131 (LRSA…LWWA), 149 to 169 (ALLI…RSGA), 183 to 203 (AAAR…AILV), 218 to 238 (ALTL…HYFL), and 246 to 266 (MTPF…FIFL).

Belongs to the UppP family.

The protein resides in the cell inner membrane. It carries out the reaction di-trans,octa-cis-undecaprenyl diphosphate + H2O = di-trans,octa-cis-undecaprenyl phosphate + phosphate + H(+). Catalyzes the dephosphorylation of undecaprenyl diphosphate (UPP). Confers resistance to bacitracin. The chain is Undecaprenyl-diphosphatase from Shewanella putrefaciens (strain CN-32 / ATCC BAA-453).